The chain runs to 216 residues: MAFLLRAVPRLQGPAAWRRPLQQLWCRAGQGDSIRWVGSRSPPSQEKPPGTETEKFHTIYRFNAIRALGFLSRLKLAQTAVTVVALPPGFYCYSQGLMTLSSLGLMSGIASFALVMLCWMSHFFRRLVGILYVNESGTLLRVAHLTFWGWRQDTYCAVSDMIPLSESEERVQDVFVRIQQYSGKQTFYLTLRYGRILDRDRFSQVFGTLATLKNSK.

The Mitochondrial matrix segment spans residues 1–68 (MAFLLRAVPR…IYRFNAIRAL (68 aa)). Residues 69 to 91 (GFLSRLKLAQTAVTVVALPPGFY) traverse the membrane as a helical segment. The Mitochondrial intermembrane portion of the chain corresponds to 92–103 (CYSQGLMTLSSL). A helical membrane pass occupies residues 104-124 (GLMSGIASFALVMLCWMSHFF). Topologically, residues 125–216 (RRLVGILYVN…GTLATLKNSK (92 aa)) are mitochondrial matrix.

This sequence belongs to the TMEM186 family. In terms of assembly, part of the mitochondrial complex I assembly/MCIA complex that comprises at least the core subunits TMEM126B, NDUFAF1, ECSIT and ACAD9 and complement subunits such as COA1 and TMEM186. Interacts with MT-ND3.

Its subcellular location is the mitochondrion inner membrane. As part of the MCIA complex, required for efficient assembly of the mitochondrial complex I. The sequence is that of Transmembrane protein 186 from Rattus norvegicus (Rat).